A 529-amino-acid chain; its full sequence is Peptide chain release factor 3 (529 aa).

A tr-type G domain is found at 11–280; it reads SKRRTFAIIS…GLVAWAPAPM (270 aa). GTP is bound by residues 20-27, 88-92, and 142-145; these read SHPDAGKT, DTPGH, and NKLD.

It belongs to the TRAFAC class translation factor GTPase superfamily. Classic translation factor GTPase family. PrfC subfamily.

The protein resides in the cytoplasm. Its function is as follows. Increases the formation of ribosomal termination complexes and stimulates activities of RF-1 and RF-2. It binds guanine nucleotides and has strong preference for UGA stop codons. It may interact directly with the ribosome. The stimulation of RF-1 and RF-2 is significantly reduced by GTP and GDP, but not by GMP. This Pectobacterium carotovorum subsp. carotovorum (strain PC1) protein is Peptide chain release factor 3.